A 132-amino-acid chain; its full sequence is Fatty acid-binding protein, brain (132 aa).

N-acetylvaline is present on valine 2. 127 to 129 (RCY) serves as a coordination point for a fatty acid.

Belongs to the calycin superfamily. Fatty-acid binding protein (FABP) family. Expressed in brain and other neural tissues.

It is found in the cytoplasm. Functionally, B-FABP could be involved in the transport of a so far unknown hydrophobic ligand with potential morphogenic activity during CNS development. It is required for the establishment of the radial glial fiber system in developing brain, a system that is necessary for the migration of immature neurons to establish cortical layers. This Mus musculus (Mouse) protein is Fatty acid-binding protein, brain (Fabp7).